The chain runs to 241 residues: Small ribosomal subunit protein uS3 (241 aa).

Residues 39 to 109 (VRNYVNKNLS…PIRINVVEVA (71 aa)) form the KH type-2 domain. The disordered stretch occupies residues 213–241 (ADEQPTNREPQQRRRQQQRRRQQFEDRSE).

The protein belongs to the universal ribosomal protein uS3 family. Part of the 30S ribosomal subunit. Forms a tight complex with proteins S10 and S14.

Its function is as follows. Binds the lower part of the 30S subunit head. Binds mRNA in the 70S ribosome, positioning it for translation. This Acaryochloris marina (strain MBIC 11017) protein is Small ribosomal subunit protein uS3.